Consider the following 147-residue polypeptide: Calmodulin (147 aa).

EF-hand domains follow at residues 8-43 (EQIA…LGLS), 44-79 (PSEA…QLKC), 81-116 (DSEQ…IGEK), and 120-147 (AEVD…LLSK). Ca(2+) is bound by residues D21, D23, S25, S27, E32, D57, D59, N61, E68, D94, N96, D98, and E105.

The protein belongs to the calmodulin family.

Calmodulin mediates the control of a large number of enzymes, ion channels and other proteins by Ca(2+). Among the enzymes to be stimulated by the calmodulin-Ca(2+) complex are a number of protein kinases and phosphatases. This chain is Calmodulin (CMD1), found in Kluyveromyces lactis (strain ATCC 8585 / CBS 2359 / DSM 70799 / NBRC 1267 / NRRL Y-1140 / WM37) (Yeast).